We begin with the raw amino-acid sequence, 670 residues long: DNA ligase (670 aa).

Residues 32-36 (DAEYD), 81-82 (SL), and glutamate 110 contribute to the NAD(+) site. Lysine 112 functions as the N6-AMP-lysine intermediate in the catalytic mechanism. Residues arginine 133, glutamate 170, lysine 289, and lysine 313 each contribute to the NAD(+) site. Zn(2+)-binding residues include cysteine 407, cysteine 410, cysteine 425, and cysteine 431. The BRCT domain occupies 590-670 (ESQLSLKGQT…ALMDLLNAAN (81 aa)).

It belongs to the NAD-dependent DNA ligase family. LigA subfamily. The cofactor is Mg(2+). It depends on Mn(2+) as a cofactor.

The enzyme catalyses NAD(+) + (deoxyribonucleotide)n-3'-hydroxyl + 5'-phospho-(deoxyribonucleotide)m = (deoxyribonucleotide)n+m + AMP + beta-nicotinamide D-nucleotide.. Its function is as follows. DNA ligase that catalyzes the formation of phosphodiester linkages between 5'-phosphoryl and 3'-hydroxyl groups in double-stranded DNA using NAD as a coenzyme and as the energy source for the reaction. It is essential for DNA replication and repair of damaged DNA. In Shewanella frigidimarina (strain NCIMB 400), this protein is DNA ligase.